The primary structure comprises 430 residues: Small ribosomal subunit protein uS9m (430 aa).

The transit peptide at 1 to 34 (MLSRLFLRHSNLRFVTLVSSKSNSQIFSSFIRPL) directs the protein to the mitochondrion. Positions 32–97 (RPLSTNSSGG…GGEGKWPEEP (66 aa)) are disordered. Positions 39-48 (SGGGGNGDGN) are enriched in gly residues. Low complexity predominate over residues 68–79 (GPFSSDDSFGSS). The span at 80 to 91 (GVAGSGLPGGEG) shows a compositional bias: gly residues.

The protein belongs to the universal ribosomal protein uS9 family. Interacts (via C terminus) with PIA2. Component of the mitochondrial ribosome small subunit. In terms of tissue distribution, expressed in root tips, young leaves, flowers and siliques.

It is found in the mitochondrion. Its function is as follows. Mitochondrial ribosomal protein required for central cell maturation. May work together with PIA2 in controlling female gametophyte development, possibly by regulating the expression of some mitochondrial proteins. This Arabidopsis thaliana (Mouse-ear cress) protein is Small ribosomal subunit protein uS9m.